The chain runs to 357 residues: Guanine nucleotide-binding protein alpha-16 subunit (357 aa).

Gly2 is lipidated: N-myristoyl glycine. Residue Cys3 is the site of S-palmitoyl cysteine attachment. Positions 32–357 constitute a G-alpha domain; the sequence is RTIKLLLLGA…RDNLRTCGLY (326 aa). Residues 35 to 48 are G1 motif; the sequence is KLLLLGAGESGKST. GTP-binding positions include 40 to 47, 175 to 181, 200 to 204, 269 to 272, and Ala329; these read GAGESGKS, LRTRIKT, DVGGQ, and NKKD. The Mg(2+) site is built by Ser47 and Thr181. Residues 173 to 181 form a G2 motif region; the sequence is DILRTRIKT. The G3 motif stretch occupies residues 196–205; sequence FLVFDVGGQR. Residues 265–272 form a G4 motif region; the sequence is ILFLNKKD. The G5 motif stretch occupies residues 327–332; that stretch reads TCATDT.

The protein belongs to the G-alpha family. G proteins are composed of 3 units; alpha, beta and gamma. The alpha chain contains the guanine nucleotide binding site.

Functionally, guanine nucleotide-binding proteins (G proteins) are involved as modulators or transducers in various transmembrane signaling systems. In the 1-cell embryo, probably together with goa-1, controls nuclear rotation and spindle elongation during mitosis. During the first embryonic cell divisons, plays a role in gpr-1/2 cortical localization and in the proper orientation of EMS blastomere mitotic spindle. The polypeptide is Guanine nucleotide-binding protein alpha-16 subunit (gpa-16) (Caenorhabditis elegans).